Here is a 152-residue protein sequence, read N- to C-terminus: Transcriptional regulator MraZ (152 aa).

SpoVT-AbrB domains follow at residues 5–52 (ASAI…PLQE) and 81–124 (AHEC…DEAA).

Belongs to the MraZ family. Forms oligomers.

It is found in the cytoplasm. The protein resides in the nucleoid. The protein is Transcriptional regulator MraZ of Shewanella denitrificans (strain OS217 / ATCC BAA-1090 / DSM 15013).